The sequence spans 220 residues: Vesicle-associated membrane protein 7 (220 aa).

An N-acetylalanine; partial modification is found at alanine 2. Residues 2–188 (AILFAVVARG…ARAMCMKNLK (187 aa)) are Cytoplasmic-facing. Residues 7-110 (VVARGTTILA…AMNSEFSSVL (104 aa)) enclose the Longin domain. In terms of domain architecture, v-SNARE coiled-coil homology spans 125 to 185 (KVMETQAQVD…RNLARAMCMK (61 aa)). 2 positions are modified to phosphoserine: serine 167 and serine 168. The chain crosses the membrane as a helical; Anchor for type IV membrane protein span at residues 189-209 (LTIIIIIVSIVFIYIIVSPLC). The Vesicular segment spans residues 210–220 (GGFTWPSCVKK).

The protein belongs to the synaptobrevin family. As to quaternary structure, component of the SNARE complex composed of STX4, SNAP23 and VAMP7 that binds SYT7 during lysosomal exocytosis. Component of the SNARE complex composed of STX7, STX8, VAMP7 and VTI1B that is required for heterotypic fusion of late endosomes with lysosomes. May interact with STX17. Interacts with PICALM. Interacts with RAB21. As to expression, detected in all tissues tested.

The protein resides in the cytoplasmic vesicle. The protein localises to the secretory vesicle membrane. Its subcellular location is the golgi apparatus. It is found in the trans-Golgi network membrane. It localises to the late endosome membrane. The protein resides in the lysosome membrane. The protein localises to the endoplasmic reticulum membrane. Its subcellular location is the phagosome membrane. It is found in the synapse. It localises to the synaptosome. Its function is as follows. Involved in the targeting and/or fusion of transport vesicles to their target membrane during transport of proteins from the early endosome to the lysosome. Required for heterotypic fusion of late endosomes with lysosomes and homotypic lysosomal fusion. Required for calcium regulated lysosomal exocytosis. Involved in the export of chylomicrons from the endoplasmic reticulum to the cis Golgi. Required for exocytosis of mediators during eosinophil and neutrophil degranulation, and target cell killing by natural killer cells. Required for focal exocytosis of late endocytic vesicles during phagosome formation. The protein is Vesicle-associated membrane protein 7 (VAMP7) of Homo sapiens (Human).